The primary structure comprises 1377 residues: DNA-directed RNA polymerase subunit beta (1377 aa).

This sequence belongs to the RNA polymerase beta chain family. As to quaternary structure, the RNAP catalytic core consists of 2 alpha, 1 beta, 1 beta' and 1 omega subunit. When a sigma factor is associated with the core the holoenzyme is formed, which can initiate transcription.

It catalyses the reaction RNA(n) + a ribonucleoside 5'-triphosphate = RNA(n+1) + diphosphate. In terms of biological role, DNA-dependent RNA polymerase catalyzes the transcription of DNA into RNA using the four ribonucleoside triphosphates as substrates. This chain is DNA-directed RNA polymerase subunit beta, found in Azoarcus sp. (strain BH72).